A 257-amino-acid chain; its full sequence is Type III pantothenate kinase (257 aa).

Residue D6–K13 participates in ATP binding. G109–R112 provides a ligand contact to substrate. The active-site Proton acceptor is the D111. D132 serves as a coordination point for K(+). T135 lines the ATP pocket. Residue T187 coordinates substrate.

It belongs to the type III pantothenate kinase family. Homodimer. Requires NH4(+) as cofactor. K(+) is required as a cofactor.

The protein resides in the cytoplasm. It catalyses the reaction (R)-pantothenate + ATP = (R)-4'-phosphopantothenate + ADP + H(+). Its pathway is cofactor biosynthesis; coenzyme A biosynthesis; CoA from (R)-pantothenate: step 1/5. Catalyzes the phosphorylation of pantothenate (Pan), the first step in CoA biosynthesis. The protein is Type III pantothenate kinase of Anaplasma marginale (strain Florida).